The primary structure comprises 278 residues: S-formylglutathione hydrolase YeiG (278 aa).

Residues Ser145, Asp223, and His256 each act as charge relay system in the active site.

It belongs to the esterase D family.

It carries out the reaction S-formylglutathione + H2O = formate + glutathione + H(+). Serine hydrolase involved in the detoxification of formaldehyde. Hydrolyzes S-formylglutathione to glutathione and formate. In Escherichia coli O157:H7, this protein is S-formylglutathione hydrolase YeiG (yeiG).